Reading from the N-terminus, the 320-residue chain is Cytochrome c biogenesis protein CcsA (320 aa).

A run of 8 helical transmembrane segments spans residues 14-34 (SFFL…YINI), 37-57 (ITIL…TFLL), 68-88 (LSNL…IHLI), 97-117 (WLGI…TLSL), 143-163 (MMLS…ILII), 228-248 (VISL…VWAN), 263-283 (WALI…IKGW), and 289-309 (AIIA…VNLL).

Belongs to the CcmF/CycK/Ccl1/NrfE/CcsA family. May interact with Ccs1.

It localises to the plastid. Its subcellular location is the chloroplast thylakoid membrane. Functionally, required during biogenesis of c-type cytochromes (cytochrome c6 and cytochrome f) at the step of heme attachment. This Marchantia polymorpha (Common liverwort) protein is Cytochrome c biogenesis protein CcsA.